The sequence spans 238 residues: MSASPDYKTNLLSHLISNKVLSFGSYTLKSGRNSPYFFTTTLLHTAPLLHATASACASVLSSPPFVTTSTPDGTPRPNFDIIFGPAYKGIPLCTAVLNELGVRDTTGAWNNISYSFNRKEAKAHGEGGNIVGAPLKGKKIVIIDDVITAGTALREAVGIIEKEGGTVVGVLVLLDREERVNDNEKKSAVGCAQRDLGENVPVKAVLSLSDIIEKLGNDIGEENLKRLKEYRAQYGAEE.

Residue Lys29 participates in 5-phospho-alpha-D-ribose 1-diphosphate binding. 37 to 38 (FF) contacts orotate. Residues 87–88 (YK), Arg118, Lys119, Lys122, His124, and 144–152 (DDVITAGTA) each bind 5-phospho-alpha-D-ribose 1-diphosphate. Orotate contacts are provided by Thr148 and Arg176.

This sequence belongs to the purine/pyrimidine phosphoribosyltransferase family. PyrE subfamily. Homodimer.

It carries out the reaction orotidine 5'-phosphate + diphosphate = orotate + 5-phospho-alpha-D-ribose 1-diphosphate. It functions in the pathway pyrimidine metabolism; UMP biosynthesis via de novo pathway; UMP from orotate: step 1/2. Its function is as follows. Catalyzes the transfer of a ribosyl phosphate group from 5-phosphoribose 1-diphosphate to orotate, leading to the formation of orotidine monophosphate (OMP). The sequence is that of Orotate phosphoribosyltransferase (URA5) from Coccidioides immitis (strain RS) (Valley fever fungus).